The sequence spans 678 residues: UvrABC system protein C (678 aa).

The span at 1 to 13 shows a compositional bias: basic residues; it reads MKKNISYGKHKTF. The disordered stretch occupies residues 1 to 25; it reads MKKNISYGKHKTFPSKLNGLEKQHS. Positions 69 to 147 constitute a GIY-YIG domain; sequence HKPGVYRMFD…IKRLHPRFNV (79 aa). The 36-residue stretch at 257-292 folds into the UVR domain; that stretch reads QSVKNDMIQAMHKAAEDLDFEQAAVYRDRLSALSHI.

It belongs to the UvrC family. In terms of assembly, interacts with UvrB in an incision complex.

The protein localises to the cytoplasm. The UvrABC repair system catalyzes the recognition and processing of DNA lesions. UvrC both incises the 5' and 3' sides of the lesion. The N-terminal half is responsible for the 3' incision and the C-terminal half is responsible for the 5' incision. The protein is UvrABC system protein C of Bartonella quintana (strain Toulouse) (Rochalimaea quintana).